We begin with the raw amino-acid sequence, 323 residues long: Probable cell division protein WhiA (323 aa).

A DNA-binding region (H-T-H motif) is located at residues Thr275–Ser309.

Belongs to the WhiA family.

Involved in cell division and chromosome segregation. The sequence is that of Probable cell division protein WhiA from Listeria innocua serovar 6a (strain ATCC BAA-680 / CLIP 11262).